Reading from the N-terminus, the 130-residue chain is Small ribosomal subunit protein uS8 (130 aa).

This sequence belongs to the universal ribosomal protein uS8 family. In terms of assembly, part of the 30S ribosomal subunit. Contacts proteins S5 and S12.

Its function is as follows. One of the primary rRNA binding proteins, it binds directly to 16S rRNA central domain where it helps coordinate assembly of the platform of the 30S subunit. This Aster yellows witches'-broom phytoplasma (strain AYWB) protein is Small ribosomal subunit protein uS8.